We begin with the raw amino-acid sequence, 89 residues long: Large ribosomal subunit protein bL27 (89 aa).

The interval 1–24 (MAHKKGTGSTRNGRDSNSKRLGVK) is disordered.

This sequence belongs to the bacterial ribosomal protein bL27 family.

In Synechococcus sp. (strain WH7803), this protein is Large ribosomal subunit protein bL27.